A 509-amino-acid polypeptide reads, in one-letter code: Phytase A (509 aa).

The signal sequence occupies residues 1-15 (MFLLMVPLFSYLAAA). A disulfide bridge links Cys-27 with Cys-36. 7 residues coordinate 1D-myo-inositol hexakisphosphate: Gln-46, Tyr-47, Arg-75, His-76, Arg-79, Thr-82, and Arg-164. Cystine bridges form between Cys-65-Cys-444, Cys-216-Cys-507, Cys-266-Cys-295, and Cys-478-Cys-486. His-76 functions as the Nucleophile in the catalytic mechanism. 2 N-linked (GlcNAc...) asparagine glycosylation sites follow: Asn-171 and Asn-208. Residue Lys-314 participates in 1D-myo-inositol hexakisphosphate binding. 3 N-linked (GlcNAc...) asparagine glycosylation sites follow: Asn-348, Asn-352, and Asn-367. Residues His-376 and Asp-377 each contribute to the 1D-myo-inositol hexakisphosphate site. Asn-401 is a glycosylation site (N-linked (GlcNAc...) asparagine).

Belongs to the histidine acid phosphatase family. As to quaternary structure, monomer.

It localises to the secreted. The enzyme catalyses 1D-myo-inositol hexakisphosphate + H2O = 1D-myo-inositol 1,2,4,5,6-pentakisphosphate + phosphate. It catalyses the reaction 1D-myo-inositol 1,2,4,5,6-pentakisphosphate + H2O = 1D-myo-inositol 1,2,5,6-tetrakisphosphate + phosphate. It carries out the reaction 1D-myo-inositol 1,2,5,6-tetrakisphosphate + H2O = 1D-myo-inositol 1,2,6-trisphosphate + phosphate. The catalysed reaction is 1D-myo-inositol 1,2,6-trisphosphate + H2O = 1D-myo-inositol 1,2-bisphosphate + phosphate. The enzyme catalyses 1D-myo-inositol 1,2-bisphosphate + H2O = 1D-myo-inositol 2-phosphate + phosphate. Catalyzes the phosphate monoester hydrolysis of phytic acid (myo-inositol hexakisphosphate), which results in the stepwise formation of myo-inositol pentakis-, tetrakis-, tris-, bis-, and monophosphates, as well as the liberation of inorganic phosphate. Myo-inositol 2-monophosphate is the end product. Is also able to dephosphorylate the classic acid phosphatase substrate p-nitrophenyl phosphate. This is Phytase A (pht-1) from Neurospora crassa (strain ATCC 24698 / 74-OR23-1A / CBS 708.71 / DSM 1257 / FGSC 987).